The following is a 326-amino-acid chain: tRNA-modifying protein YgfZ (326 aa).

W27 and W189 together coordinate folate.

The protein belongs to the tRNA-modifying YgfZ family.

Its subcellular location is the cytoplasm. Functionally, folate-binding protein involved in regulating the level of ATP-DnaA and in the modification of some tRNAs. It is probably a key factor in regulatory networks that act via tRNA modification, such as initiation of chromosomal replication. The protein is tRNA-modifying protein YgfZ of Enterobacter sp. (strain 638).